Consider the following 365-residue polypeptide: MSAKRSIGDPEILKKRIPQNQKYQHVKTRLDTGNSMTKYMERIEEIKKNYRYKKDELFKRIKVSTFAQLVLQVASVSEERESGEMTADELQRLEDNSSVISDTEFLTDRPNGKGSPVSESKSPVQFIDSERGEEFIQTSRSTLQSVISGVGELDLGNQADKEKQSLPSSSALDKPYEDCPFLLLDVRDRDSYDQCHIVGARNYPTAMLSRTMNPFTSEILEYRNAHGKIIILYDEDERIASQAATTMCERGFENLFMLSGGLKVISQKFPQGLTTGSFPSTCLAPPTQTKSALKRTPRDPIVPAENKWRFSSQDLEIIENHVENMLMSTSTPSRLRLDSRNSKVPSSASSARSLSSTSSHSKPWK.

The segment covering 1–14 (MSAKRSIGDPEILK) has biased composition (basic and acidic residues). Disordered regions lie at residues 1 to 23 (MSAKRSIGDPEILKKRIPQNQKY) and 104 to 123 (EFLTDRPNGKGSPVSESKSP). One can recognise a Rhodanese domain in the interval 177 to 274 (EDCPFLLLDV…ISQKFPQGLT (98 aa)). The tract at residues 329 to 365 (TSTPSRLRLDSRNSKVPSSASSARSLSSTSSHSKPWK) is disordered. Positions 342 to 365 (SKVPSSASSARSLSSTSSHSKPWK) are enriched in low complexity.

This sequence belongs to the CEP41 family.

Its subcellular location is the cytoplasm. It localises to the cytoskeleton. The protein localises to the microtubule organizing center. It is found in the centrosome. The protein resides in the cell projection. Its subcellular location is the cilium. It localises to the cilium basal body. Its function is as follows. Required during ciliogenesis for tubulin glutamylation in cilium. Probably acts by participating in the transport of tubulin polyglutamylases between the basal body and the cilium. The polypeptide is Centrosomal protein of 41 kDa B (cep41-b) (Xenopus laevis (African clawed frog)).